We begin with the raw amino-acid sequence, 189 residues long: WASH complex subunit homolog 3 (189 aa).

The stretch at 35-74 (MTEMLNNFGNKMEDILEKAEQSLDTADRKLRLMESKLAGM) forms a coiled coil. 2 disordered regions span residues 76-101 (LEDK…NPSS) and 150-189 (SEGV…SDSD). Residues 150 to 165 (SEGVDPSILKRGDEPS) show a composition bias toward basic and acidic residues. Residues 167–189 (PQAQTSRNYESSGESTASFSDSD) are compositionally biased toward polar residues. At T182 the chain carries Phosphothreonine.

Belongs to the CCDC53 family. Probable component of the WASH complex. Component of the DHIC (ddl-1-containing hsf-1 inhibitory complex), which contains at least ddl-1, ddl-2, hsb-1 and hsf-1. Within the complex, interacts with ddl-2. Within the complex, interacts with hsb-1. Within the complex, interacts with hsf-1. Formation of the DHIC may be dependent upon the Insulin/IGF-1-like signaling (IIS) mediated pathway. In terms of processing, phosphorylated. Phosphorylation on Thr-182 may promote DHIC complex dissociation and consequently the activation of heat-shock transcription factor hsf-1. Phosphorylation is modulated by the Insulin/IGF-1-like signaling (IIS) mediated pathway. Expressed in pharynx, intestine, body wall muscles, vulva muscles, spermatheca, and several head and tail neurons.

Its function is as follows. Acts as a component of the WASH core complex that functions as a nucleation-promoting factor (NPF) at the surface of endosomes, where it recruits and activates the Arp2/3 complex to induce actin polymerization, playing a key role in the fission of tubules that serve as transport intermediates during endosome sorting. Acts as a component of the DHIC (ddl-1-containing hsf-1 inhibitory complex) which modulates lifespan by sequestering the heat-shock transcription factor hsf-1 to negatively regulate its binding to DNA and its transcriptional activity. The protein is WASH complex subunit homolog 3 (ddl-1) of Caenorhabditis elegans.